The chain runs to 322 residues: Succinate/fumarate mitochondrial transporter (322 aa).

3 Solcar repeats span residues S8–L99, G111–F202, and L212–H303. The next 6 membrane-spanning stretches (helical) occupy residues A11–L31, F68–I88, F114–V134, G177–F193, C219–L235, and G278–T295.

Belongs to the mitochondrial carrier (TC 2.A.29) family.

It localises to the mitochondrion inner membrane. Its function is as follows. Transports cytoplasmic succinate, derived from isocitrate by the action of isocitrate lyase in the cytosol, into the mitochondrial matrix in exchange for fumarate. This Saccharomyces cerevisiae (strain ATCC 204508 / S288c) (Baker's yeast) protein is Succinate/fumarate mitochondrial transporter (SFC1).